We begin with the raw amino-acid sequence, 673 residues long: Centrosomal protein kizuna (673 aa).

5 disordered regions span residues 175 to 207, 255 to 413, 432 to 480, 494 to 516, and 613 to 673; these read TEHK…TDSC, GSNT…ALKL, QTLS…NSVK, ECGR…ILND, and SEAS…DFYD. Composition is skewed to polar residues over residues 196-207 and 255-266; these read QTAQSSNVTDSC and GSNTRHGKSNLS. Basic and acidic residues-rich tracts occupy residues 267 to 293 and 303 to 316; these read EGKK…DLKC and ILTR…EKRA. S317 and S321 each carry phosphoserine. A compositionally biased stretch (basic and acidic residues) spans 331 to 357; the sequence is SENKWSQEKHSPWEGVSDHLAHREPKS. The residue at position 379 (T379) is a Phosphothreonine; by PLK1. The span at 471 to 480 shows a compositional bias: basic and acidic residues; that stretch reads TLKEHDNSVK. Low complexity-rich tracts occupy residues 503 to 512 and 613 to 625; these read SSESSCSLPS and SEAS…GSPL. Phosphoserine occurs at positions 647, 650, and 652.

The protein belongs to the kizuna family. Interacts with AKAP9, CEP72, ODF2, PCNT and TUBGCP2. Post-translationally, phosphorylation at Thr-379 by PLK1 is not needed for centrosomal localization or pericentriolar material expansion but is indispensable for spindle-pole stabilization.

It is found in the cytoplasm. It localises to the cytoskeleton. Its subcellular location is the microtubule organizing center. The protein resides in the centrosome. The protein localises to the cilium basal body. Functionally, centrosomal protein required for establishing a robust mitotic centrosome architecture that can endure the forces that converge on the centrosomes during spindle formation. Required for stabilizing the expanded pericentriolar material around the centriole. This Homo sapiens (Human) protein is Centrosomal protein kizuna (KIZ).